A 247-amino-acid polypeptide reads, in one-letter code: tRNA pseudouridine synthase A (247 aa).

D52 functions as the Nucleophile in the catalytic mechanism. Residue Y113 participates in substrate binding.

This sequence belongs to the tRNA pseudouridine synthase TruA family. In terms of assembly, homodimer.

The enzyme catalyses uridine(38/39/40) in tRNA = pseudouridine(38/39/40) in tRNA. Functionally, formation of pseudouridine at positions 38, 39 and 40 in the anticodon stem and loop of transfer RNAs. In Sinorhizobium medicae (strain WSM419) (Ensifer medicae), this protein is tRNA pseudouridine synthase A.